The following is a 156-amino-acid chain: Ribosomal RNA large subunit methyltransferase H (156 aa).

Residues leucine 73, glycine 104, and 123–128 (LSPLTM) each bind S-adenosyl-L-methionine.

It belongs to the RNA methyltransferase RlmH family. In terms of assembly, homodimer.

It localises to the cytoplasm. The catalysed reaction is pseudouridine(1915) in 23S rRNA + S-adenosyl-L-methionine = N(3)-methylpseudouridine(1915) in 23S rRNA + S-adenosyl-L-homocysteine + H(+). Functionally, specifically methylates the pseudouridine at position 1915 (m3Psi1915) in 23S rRNA. This is Ribosomal RNA large subunit methyltransferase H from Proteus mirabilis (strain HI4320).